A 265-amino-acid polypeptide reads, in one-letter code: Type 1 encapsulin shell protein (265 aa).

FMN contacts are provided by residues 79–81 (RAT) and Trp-87. A pore-forming loop region spans residues 184-189 (EAGHYP). Position 235 (Glu-235) interacts with FMN.

The protein belongs to the encapsulin family. Family 1 subfamily. This encapsulin nanocompartment is formed by 60 subunits; monomers form pentamers which assemble to form shells. There are 12 pores where the pentamers meet as well as 3-fold axis channels and dimer channels; none are larger than 3-4 Angstroms in diameter. The N-terminus of the protein is inside the shell, the C-terminus is outside. FMN serves as cofactor.

The protein resides in the encapsulin nanocompartment. In terms of biological role, shell component of a type 1 encapsulin nanocompartment. Assembles into proteinaceous shells 23-24 nm in diameter with 2-2.5 nm thick walls. Cargo protein Flp (ferritin-like protein, may store iron) is targeted to the interior via its C-terminal extension. This is Type 1 encapsulin shell protein from Thermotoga petrophila (strain ATCC BAA-488 / DSM 13995 / JCM 10881 / RKU-1).